The chain runs to 1020 residues: Protein SCAR3 (1020 aa).

3 disordered regions span residues 167–198 (NLSQGNKKFQKDKKHCKMKKKKTSSRSRDMSR), 351–382 (DEKPSYGEGIGGVDFHSKDNENDKSESGLRKR), and 802–827 (DYLSDNHSLSNSEPWEESSDSHGRKE). Over residues 174-191 (KFQKDKKHCKMKKKKTSS) the composition is skewed to basic residues. Over residues 365–382 (FHSKDNENDKSESGLRKR) the composition is skewed to basic and acidic residues. The span at 802 to 814 (DYLSDNHSLSNSE) shows a compositional bias: polar residues. Residues 954-972 (ETGDFLQQIRTQQFNLRPV) form the WH2 domain.

Belongs to the SCAR/WAVE family. In terms of assembly, binds BRK1. Interacts with SPK1, ABI1, ABI2, ABI3 and ABI4. In terms of tissue distribution, expressed in expanding cotyledons, expanding leaves and expanding siliques containing developing embryos. Detected in unopened flower buds. Reduced expression in mature leaves and mature cotyledons.

The protein resides in the cytoplasm. It localises to the cytoskeleton. Involved in regulation of actin and microtubule organization. Part of a WAVE complex that activates the Arp2/3 complex. Regulates trichome branch positioning and expansion. The polypeptide is Protein SCAR3 (SCAR3) (Arabidopsis thaliana (Mouse-ear cress)).